Here is a 699-residue protein sequence, read N- to C-terminus: Elongation factor G (699 aa).

The region spanning 8 to 283 (EHIRNIGICA…AIVDFLPSPI (276 aa)) is the tr-type G domain. GTP-binding positions include 17–24 (AHIDAGKT), 81–85 (DTPGH), and 135–138 (NKMD).

This sequence belongs to the TRAFAC class translation factor GTPase superfamily. Classic translation factor GTPase family. EF-G/EF-2 subfamily.

Its subcellular location is the cytoplasm. Catalyzes the GTP-dependent ribosomal translocation step during translation elongation. During this step, the ribosome changes from the pre-translocational (PRE) to the post-translocational (POST) state as the newly formed A-site-bound peptidyl-tRNA and P-site-bound deacylated tRNA move to the P and E sites, respectively. Catalyzes the coordinated movement of the two tRNA molecules, the mRNA and conformational changes in the ribosome. This chain is Elongation factor G, found in Rickettsia typhi (strain ATCC VR-144 / Wilmington).